The primary structure comprises 181 residues: MAVDAQNLVWIDMEMTGLHPEVDVVLEIATIVTDANLNILAEGPVLAIHQSDDVLNNMNQWCIDTHGKSGLTERSRKSTVDEQTAVAETIRFLEKYVPKGASPLCGNTIGQDRRFMVKYMPELEDYFHYRNIDVSTLKELVKRWKPEVLEGFSKKGVHLALDDIRESIAELVFYRQHIFNI.

An Exonuclease domain is found at 8–171; sequence LVWIDMEMTG…DDIRESIAEL (164 aa). Y129 is a catalytic residue.

Belongs to the oligoribonuclease family.

The protein resides in the cytoplasm. Its function is as follows. 3'-to-5' exoribonuclease specific for small oligoribonucleotides. This Pseudoalteromonas atlantica (strain T6c / ATCC BAA-1087) protein is Oligoribonuclease.